A 274-amino-acid chain; its full sequence is Cytochrome b-c1 complex subunit Rieske, mitochondrial (274 aa).

Positions 29 to 49 are disordered; sequence XXXXXXXXTPEPPVLDPKRPI. The Mitochondrial matrix segment spans residues 79 to 103; it reads SHTDIKVPDFSDYRRSEVLDKTKSS. Residues 104-140 form a helical membrane-spanning segment; that stretch reads RESSDARKVFSYMVTATTAVGVTYAAKSIVTQFISSM. Over 141–274 the chain is Mitochondrial intermembrane; it reads SASADVLAMS…FLSDDMVVVG (134 aa). Positions 187–272 constitute a Rieske domain; that stretch reads EAAVELSQLR…YEFLSDDMVV (86 aa). [2Fe-2S] cluster-binding residues include Cys-217, His-219, Cys-236, His-239, and Ser-241. Cysteines 222 and 238 form a disulfide.

It belongs to the Rieske iron-sulfur protein family. Component of the ubiquinol-cytochrome c oxidoreductase (cytochrome b-c1 complex, complex III, CIII), a multisubunit enzyme composed of 11 subunits. The complex is composed of 3 respiratory subunits cytochrome b, cytochrome c1 and Rieske protein UQCRFS1, 2 core protein subunits UQCRC1/QCR1 and UQCRC2/QCR2, and 6 low-molecular weight protein subunits UQCRH/QCR6, UQCRB/QCR7, UQCRQ/QCR8, UQCR10/QCR9, UQCR11/QCR10 and subunit 9, the cleavage product of Rieske protein UQCRFS1. The complex exists as an obligatory dimer and forms supercomplexes (SCs) in the inner mitochondrial membrane with NADH-ubiquinone oxidoreductase (complex I, CI) and cytochrome c oxidase (complex IV, CIV), resulting in different assemblies (supercomplex SCI(1)III(2)IV(1) and megacomplex MCI(2)III(2)IV(2)). Incorporation of the Rieske protein UQCRFS1 is the penultimate step in complex III assembly. Interacts with TTC19, which is involved in the clearance of UQCRFS1 fragments. As to quaternary structure, component of the ubiquinol-cytochrome c oxidoreductase (cytochrome b-c1 complex, complex III, CIII). Subunit 9 corresponds to the mitochondrial targeting sequence (MTS) of Rieske protein UQCRFS1. It is retained after processing and incorporated inside complex III, where it remains bound to the complex and localizes between the 2 core subunits UQCRC1/QCR1 and UQCRC2/QCR2. [2Fe-2S] cluster serves as cofactor. Proteolytic processing is necessary for the correct insertion of UQCRFS1 in the complex III dimer. Several fragments are generated during UQCRFS1 insertion, most probably due to the endogenous matrix-processing peptidase (MPP) activity of the 2 core protein subunits UQCRC1/QCR1 and UQCRC2/QCR2, which are homologous to the 2 mitochondrial-processing peptidase (MPP) subunits beta-MPP and alpha-MPP respectively. The action of the protease is also necessary for the clearance of the UQCRFS1 fragments.

It localises to the mitochondrion inner membrane. The catalysed reaction is a quinol + 2 Fe(III)-[cytochrome c](out) = a quinone + 2 Fe(II)-[cytochrome c](out) + 2 H(+)(out). Component of the ubiquinol-cytochrome c oxidoreductase, a multisubunit transmembrane complex that is part of the mitochondrial electron transport chain which drives oxidative phosphorylation. The respiratory chain contains 3 multisubunit complexes succinate dehydrogenase (complex II, CII), ubiquinol-cytochrome c oxidoreductase (cytochrome b-c1 complex, complex III, CIII) and cytochrome c oxidase (complex IV, CIV), that cooperate to transfer electrons derived from NADH and succinate to molecular oxygen, creating an electrochemical gradient over the inner membrane that drives transmembrane transport and the ATP synthase. The cytochrome b-c1 complex catalyzes electron transfer from ubiquinol to cytochrome c, linking this redox reaction to translocation of protons across the mitochondrial inner membrane, with protons being carried across the membrane as hydrogens on the quinol. In the process called Q cycle, 2 protons are consumed from the matrix, 4 protons are released into the intermembrane space and 2 electrons are passed to cytochrome c. The Rieske protein is a catalytic core subunit containing a [2Fe-2S] iron-sulfur cluster. It cycles between 2 conformational states during catalysis to transfer electrons from the quinol bound in the Q(0) site in cytochrome b to cytochrome c1. Incorporation of UQCRFS1 is the penultimate step in complex III assembly. Its function is as follows. Component of the ubiquinol-cytochrome c oxidoreductase (cytochrome b-c1 complex, complex III, CIII). UQCRFS1 undergoes proteolytic processing once it is incorporated in the complex III dimer. One of the fragments, called subunit 9, corresponds to its mitochondrial targeting sequence (MTS). The proteolytic processing is necessary for the correct insertion of UQCRFS1 in the complex III dimer, but the persistence of UQCRFS1-derived fragments may prevent newly imported UQCRFS1 to be processed and assembled into complex III and is detrimental for the complex III structure and function. This chain is Cytochrome b-c1 complex subunit Rieske, mitochondrial (UQCRFS1), found in Saimiri sciureus (Common squirrel monkey).